The sequence spans 419 residues: 3-isopropylmalate dehydratase large subunit (419 aa).

[4Fe-4S] cluster contacts are provided by C300, C360, and C363.

It belongs to the aconitase/IPM isomerase family. LeuC type 2 subfamily. In terms of assembly, heterodimer of LeuC and LeuD. [4Fe-4S] cluster is required as a cofactor.

The catalysed reaction is (2R,3S)-3-isopropylmalate = (2S)-2-isopropylmalate. The protein operates within amino-acid biosynthesis; L-leucine biosynthesis; L-leucine from 3-methyl-2-oxobutanoate: step 2/4. Its function is as follows. Catalyzes the isomerization between 2-isopropylmalate and 3-isopropylmalate, via the formation of 2-isopropylmaleate. The protein is 3-isopropylmalate dehydratase large subunit of Clostridium beijerinckii (strain ATCC 51743 / NCIMB 8052) (Clostridium acetobutylicum).